A 266-amino-acid chain; its full sequence is MQGSTRRAGAMTDVHRRFLQLLMTHGVLEEWEVRRLQNHCYQVHDRNATVDKLEDFINNINSVLESLYIEIKKGVTEDDGRPIYALVNLATTSVSKMATDFAENELDLFRKALELIVDSETGFASSTNILNLVDQLKGKKMRKKEAEQVLQKFVQSKWLIEKEGEFTLHGRAILEMEQFIRESYPDSVKMCNICHGLLIQGQSCETCGIRMHLPCVAKYFQSIPEPHCPHCNDYWPHDIPEVYNPEKEREAGISKSSRKSLRTRQH.

The interaction with NSMCE3 stretch occupies residues 1–102 (MQGSTRRAGA…SVSKMATDFA (102 aa)). The RING-type; atypical zinc-finger motif lies at 191-232 (CNICHGLLIQGQSCETCGIRMHLPCVAKYFQSIPEPHCPHCN). Residues 246–266 (EKEREAGISKSSRKSLRTRQH) form a disordered region. A compositionally biased stretch (basic residues) spans 256–266 (SSRKSLRTRQH).

This sequence belongs to the NSE1 family. Component of the SMC5-SMC6 complex which consists at least of SMC5, SMC6, NSMCE2, NSMCE1, NSMCE4A or EID3 and NSMCE3. NSMCE1, NSMCE4A or EID3 and NSMCE3 probably form a subcomplex that bridges the head domains of the SMC5-SMC6 heterodimer. Interacts with NSMCE3. In terms of processing, ubiquitinated.

The protein localises to the nucleus. The protein resides in the chromosome. It localises to the telomere. It carries out the reaction S-ubiquitinyl-[E2 ubiquitin-conjugating enzyme]-L-cysteine + [acceptor protein]-L-lysine = [E2 ubiquitin-conjugating enzyme]-L-cysteine + N(6)-ubiquitinyl-[acceptor protein]-L-lysine.. RING-type zinc finger-containing E3 ubiquitin ligase that assembles with melanoma antigen protein (MAGE) to catalyze the direct transfer of ubiquitin from E2 ubiquitin-conjugating enzyme to a specific substrate. Within MAGE-RING ubiquitin ligase complex, MAGE stimulates and specifies ubiquitin ligase activity likely through recruitment and/or stabilization of the E2 ubiquitin-conjugating enzyme at the E3:substrate complex. Involved in maintenance of genome integrity, DNA damage response and DNA repair. NSMCE3/MAGEG1 and NSMCE1 ubiquitin ligase are components of SMC5-SMC6 complex and may positively regulate homologous recombination-mediated DNA repair. The polypeptide is Non-structural maintenance of chromosomes element 1 homolog (Nsmce1) (Mus musculus (Mouse)).